The primary structure comprises 82 residues: MDPIISAASVIAAGLAVGLAAIGPGIGQGSAAANAVEGLARQPEAEGKIRGTLLLSLAFMESLTIYGLVVALSLLFANPFIK.

The next 2 helical transmembrane spans lie at 3–23 (PIIS…AAIG) and 57–77 (LAFM…LLFA).

This sequence belongs to the ATPase C chain family. In terms of assembly, F-type ATPases have 2 components, F(1) - the catalytic core - and F(0) - the membrane proton channel. F(1) has five subunits: alpha(3), beta(3), gamma(1), delta(1), epsilon(1). F(0) has four main subunits: a(1), b(1), b'(1) and c(10-14). The alpha and beta chains form an alternating ring which encloses part of the gamma chain. F(1) is attached to F(0) by a central stalk formed by the gamma and epsilon chains, while a peripheral stalk is formed by the delta, b and b' chains.

The protein resides in the plastid. It localises to the chloroplast thylakoid membrane. In terms of biological role, f(1)F(0) ATP synthase produces ATP from ADP in the presence of a proton or sodium gradient. F-type ATPases consist of two structural domains, F(1) containing the extramembraneous catalytic core and F(0) containing the membrane proton channel, linked together by a central stalk and a peripheral stalk. During catalysis, ATP synthesis in the catalytic domain of F(1) is coupled via a rotary mechanism of the central stalk subunits to proton translocation. Key component of the F(0) channel; it plays a direct role in translocation across the membrane. A homomeric c-ring of between 10-14 subunits forms the central stalk rotor element with the F(1) delta and epsilon subunits. The polypeptide is ATP synthase subunit c, chloroplastic (Cyanidium caldarium (Red alga)).